The following is a 160-amino-acid chain: Cytochrome b6-f complex subunit 4 (160 aa).

The next 3 helical transmembrane spans lie at 36–56 (LLYM…SLAV), 95–115 (LLGV…PFIE), and 131–151 (TLFL…ALPI).

The protein belongs to the cytochrome b family. PetD subfamily. In terms of assembly, the 4 large subunits of the cytochrome b6-f complex are cytochrome b6, subunit IV (17 kDa polypeptide, petD), cytochrome f and the Rieske protein, while the 4 small subunits are petG, petL, petM and petN. The complex functions as a dimer.

It localises to the plastid. The protein resides in the chloroplast thylakoid membrane. Functionally, component of the cytochrome b6-f complex, which mediates electron transfer between photosystem II (PSII) and photosystem I (PSI), cyclic electron flow around PSI, and state transitions. The chain is Cytochrome b6-f complex subunit 4 from Oltmannsiellopsis viridis (Marine flagellate).